The primary structure comprises 244 residues: Precorrin-6A reductase (244 aa).

The protein belongs to the precorrin-6x reductase family.

It catalyses the reaction precorrin-6B + NADP(+) = precorrin-6A + NADPH + 2 H(+). The protein operates within cofactor biosynthesis; adenosylcobalamin biosynthesis; cob(II)yrinate a,c-diamide from precorrin-2 (aerobic route): step 6/10. Its function is as follows. Catalyzes the reduction of the macrocycle of precorrin-6X into precorrin-6Y. The protein is Precorrin-6A reductase (cobK) of Mycobacterium tuberculosis (strain CDC 1551 / Oshkosh).